A 241-amino-acid polypeptide reads, in one-letter code: F-box protein At3g22350 (241 aa).

The F-box domain occupies 1 to 44 (MSDLPLDLVEEILSRVSATSLKRLRSTCKQWNTLFKKRSFSQKH).

The sequence is that of F-box protein At3g22350 from Arabidopsis thaliana (Mouse-ear cress).